A 158-amino-acid polypeptide reads, in one-letter code: PRA1 family protein 2 (158 aa).

Helical transmembrane passes span 36–58 (NLNF…TLFT), 62–79 (LLVA…LFFV), 88–108 (FAVL…VIVI), and 113–133 (GLTL…HSAL).

This sequence belongs to the PRA1 family.

It is found in the membrane. Functionally, may act as a general Rab protein regulator. The chain is PRA1 family protein 2 (prafB) from Dictyostelium discoideum (Social amoeba).